The following is a 75-amino-acid chain: Beta-defensin 42 (75 aa).

The first 21 residues, 1–21 (MNLRLSCLLFILVTSLPAGRC), serve as a signal peptide directing secretion. Cystine bridges form between C33–C60, C40–C54, and C44–C61.

This sequence belongs to the beta-defensin family. As to expression, epididymis-specific, with highest levels in the initial segment and distal caput.

The protein localises to the secreted. In terms of biological role, has bactericidal activity. May play a role in the antimicrobial protection of sperm and urogenital tract epithelia. The protein is Beta-defensin 42 of Mus musculus (Mouse).